Reading from the N-terminus, the 289-residue chain is 4-diphosphocytidyl-2-C-methyl-D-erythritol kinase (289 aa).

Lysine 11 is a catalytic residue. Proline 96–serine 106 is an ATP binding site. The active site involves aspartate 138.

The protein belongs to the GHMP kinase family. IspE subfamily.

It catalyses the reaction 4-CDP-2-C-methyl-D-erythritol + ATP = 4-CDP-2-C-methyl-D-erythritol 2-phosphate + ADP + H(+). Its pathway is isoprenoid biosynthesis; isopentenyl diphosphate biosynthesis via DXP pathway; isopentenyl diphosphate from 1-deoxy-D-xylulose 5-phosphate: step 3/6. In terms of biological role, catalyzes the phosphorylation of the position 2 hydroxy group of 4-diphosphocytidyl-2C-methyl-D-erythritol. The protein is 4-diphosphocytidyl-2-C-methyl-D-erythritol kinase of Azorhizobium caulinodans (strain ATCC 43989 / DSM 5975 / JCM 20966 / LMG 6465 / NBRC 14845 / NCIMB 13405 / ORS 571).